The chain runs to 312 residues: Acetaldehyde dehydrogenase 2 (312 aa).

Position 11 to 14 (11 to 14) interacts with NAD(+); the sequence is SGNI. Cysteine 129 (acyl-thioester intermediate) is an active-site residue. Residues 160–168 and asparagine 287 each bind NAD(+); that span reads SAGPGTRAN.

Belongs to the acetaldehyde dehydrogenase family.

It catalyses the reaction acetaldehyde + NAD(+) + CoA = acetyl-CoA + NADH + H(+). The chain is Acetaldehyde dehydrogenase 2 from Novosphingobium aromaticivorans (strain ATCC 700278 / DSM 12444 / CCUG 56034 / CIP 105152 / NBRC 16084 / F199).